A 313-amino-acid polypeptide reads, in one-letter code: Dihydroorotate dehydrogenase B (NAD(+)), catalytic subunit (313 aa).

Residues S21 and 45-46 (KA) contribute to the FMN site. Residues K45 and 69 to 73 (NAIGL) each bind substrate. FMN is bound by residues N99 and N127. A substrate-binding site is contributed by N127. C130 (nucleophile) is an active-site residue. 2 residues coordinate FMN: K165 and I191. 192 to 193 (NT) is a binding site for substrate. Residues G217, 243–244 (GG), and 265–266 (GT) contribute to the FMN site.

It belongs to the dihydroorotate dehydrogenase family. Type 1 subfamily. In terms of assembly, heterotetramer of 2 PyrK and 2 PyrD type B subunits. It depends on FMN as a cofactor.

Its subcellular location is the cytoplasm. It carries out the reaction (S)-dihydroorotate + NAD(+) = orotate + NADH + H(+). Its pathway is pyrimidine metabolism; UMP biosynthesis via de novo pathway; orotate from (S)-dihydroorotate (NAD(+) route): step 1/1. Its function is as follows. Catalyzes the conversion of dihydroorotate to orotate with NAD(+) as electron acceptor. This chain is Dihydroorotate dehydrogenase B (NAD(+)), catalytic subunit (pyrD), found in Geobacillus sp. (strain WCH70).